We begin with the raw amino-acid sequence, 185 residues long: Elongation factor P (185 aa).

This sequence belongs to the elongation factor P family.

The protein resides in the cytoplasm. The protein operates within protein biosynthesis; polypeptide chain elongation. Involved in peptide bond synthesis. Stimulates efficient translation and peptide-bond synthesis on native or reconstituted 70S ribosomes in vitro. Probably functions indirectly by altering the affinity of the ribosome for aminoacyl-tRNA, thus increasing their reactivity as acceptors for peptidyl transferase. The polypeptide is Elongation factor P (Picosynechococcus sp. (strain ATCC 27264 / PCC 7002 / PR-6) (Agmenellum quadruplicatum)).